The primary structure comprises 299 residues: Nicotinate-nucleotide pyrophosphorylase [carboxylating] (299 aa).

An important for hexamer formation region spans residues 8-12; sequence LLLPP. Residues arginine 102, 138 to 139, 160 to 161, lysine 171, glutamate 201, aspartate 222, 248 to 250, and glycine 270 each bind quinolinate; these read RK, HR, and SGG.

This sequence belongs to the NadC/ModD family. Hexamer formed by 3 homodimers.

The enzyme catalyses nicotinate beta-D-ribonucleotide + CO2 + diphosphate = quinolinate + 5-phospho-alpha-D-ribose 1-diphosphate + 2 H(+). The protein operates within cofactor biosynthesis; NAD(+) biosynthesis; nicotinate D-ribonucleotide from quinolinate: step 1/1. Functionally, involved in the catabolism of quinolinic acid (QA). This Sus scrofa (Pig) protein is Nicotinate-nucleotide pyrophosphorylase [carboxylating].